We begin with the raw amino-acid sequence, 404 residues long: DNA gyrase subunit B (404 aa).

The region spanning 321–404 (SEIYIVEGDS…VIIMTDADVD (84 aa)) is the Toprim domain. Mg(2+) is bound by residues Glu-327, Asp-400, and Asp-402.

Belongs to the type II topoisomerase GyrB family. Heterotetramer, composed of two GyrA and two GyrB chains. In the heterotetramer, GyrA contains the active site tyrosine that forms a transient covalent intermediate with DNA, while GyrB binds cofactors and catalyzes ATP hydrolysis. The cofactor is Mg(2+). Mn(2+) serves as cofactor. Requires Ca(2+) as cofactor.

It localises to the cytoplasm. It carries out the reaction ATP-dependent breakage, passage and rejoining of double-stranded DNA.. In terms of biological role, a type II topoisomerase that negatively supercoils closed circular double-stranded (ds) DNA in an ATP-dependent manner to modulate DNA topology and maintain chromosomes in an underwound state. Negative supercoiling favors strand separation, and DNA replication, transcription, recombination and repair, all of which involve strand separation. Also able to catalyze the interconversion of other topological isomers of dsDNA rings, including catenanes and knotted rings. Type II topoisomerases break and join 2 DNA strands simultaneously in an ATP-dependent manner. This is DNA gyrase subunit B (gyrB) from Bacillus cereus.